We begin with the raw amino-acid sequence, 26 residues long: Probable early E4 17 kDa protein (26 aa).

The chain is Probable early E4 17 kDa protein from Homo sapiens (Human).